The following is a 438-amino-acid chain: V-type ATP synthase beta chain (438 aa).

This sequence belongs to the ATPase alpha/beta chains family.

Functionally, produces ATP from ADP in the presence of a proton gradient across the membrane. The V-type beta chain is a regulatory subunit. This Protochlamydia amoebophila (strain UWE25) protein is V-type ATP synthase beta chain.